We begin with the raw amino-acid sequence, 95 residues long: Large ribosomal subunit protein bL25 (95 aa).

Belongs to the bacterial ribosomal protein bL25 family. Part of the 50S ribosomal subunit; part of the 5S rRNA/L5/L18/L25 subcomplex. Contacts the 5S rRNA. Binds to the 5S rRNA independently of L5 and L18.

Functionally, this is one of the proteins that binds to the 5S RNA in the ribosome where it forms part of the central protuberance. In Haemophilus ducreyi (strain 35000HP / ATCC 700724), this protein is Large ribosomal subunit protein bL25.